The following is a 361-amino-acid chain: Aromatic amino acid aminotransferase (361 aa).

Lys215 is subject to N6-(pyridoxal phosphate)lysine.

It belongs to the class-II pyridoxal-phosphate-dependent aminotransferase family. In terms of assembly, homodimer. Pyridoxal 5'-phosphate is required as a cofactor.

It carries out the reaction an aromatic L-alpha-amino acid + 2-oxoglutarate = an aromatic oxo-acid + L-glutamate. In terms of biological role, aminotransferase that catalyzes the conversion of aromatic amino acids and 2-oxoglutarate into corresponding aromatic oxo acids and L-glutamate. This Mycolicibacterium smegmatis (strain ATCC 700084 / mc(2)155) (Mycobacterium smegmatis) protein is Aromatic amino acid aminotransferase.